The sequence spans 250 residues: Cell division protein ZapD (250 aa).

The protein belongs to the ZapD family. Interacts with FtsZ.

Its subcellular location is the cytoplasm. Its function is as follows. Cell division factor that enhances FtsZ-ring assembly. Directly interacts with FtsZ and promotes bundling of FtsZ protofilaments, with a reduction in FtsZ GTPase activity. The chain is Cell division protein ZapD from Bordetella petrii (strain ATCC BAA-461 / DSM 12804 / CCUG 43448).